A 172-amino-acid chain; its full sequence is Adenine phosphoribosyltransferase (172 aa).

It belongs to the purine/pyrimidine phosphoribosyltransferase family. As to quaternary structure, homodimer.

The protein resides in the cytoplasm. The enzyme catalyses AMP + diphosphate = 5-phospho-alpha-D-ribose 1-diphosphate + adenine. It participates in purine metabolism; AMP biosynthesis via salvage pathway; AMP from adenine: step 1/1. Functionally, catalyzes a salvage reaction resulting in the formation of AMP, that is energically less costly than de novo synthesis. The sequence is that of Adenine phosphoribosyltransferase from Synechocystis sp. (strain ATCC 27184 / PCC 6803 / Kazusa).